Consider the following 368-residue polypeptide: Alanine racemase (368 aa).

The active-site Proton acceptor; specific for D-alanine is lysine 40. N6-(pyridoxal phosphate)lysine is present on lysine 40. Arginine 134 lines the substrate pocket. The active-site Proton acceptor; specific for L-alanine is tyrosine 263. Methionine 310 provides a ligand contact to substrate.

This sequence belongs to the alanine racemase family. Requires pyridoxal 5'-phosphate as cofactor.

It catalyses the reaction L-alanine = D-alanine. The protein operates within amino-acid biosynthesis; D-alanine biosynthesis; D-alanine from L-alanine: step 1/1. In terms of biological role, catalyzes the interconversion of L-alanine and D-alanine. May also act on other amino acids. In Listeria monocytogenes serotype 4b (strain F2365), this protein is Alanine racemase (alr).